The primary structure comprises 190 residues: Putative phosphatidylethanolamine-binding protein (190 aa).

The protein belongs to the phosphatidylethanolamine-binding protein family.

In Plasmodium falciparum, this protein is Putative phosphatidylethanolamine-binding protein.